Consider the following 668-residue polypeptide: Fructose-1,6-bisphosphatase class 3 (668 aa).

Belongs to the FBPase class 3 family. Mn(2+) is required as a cofactor.

The enzyme catalyses beta-D-fructose 1,6-bisphosphate + H2O = beta-D-fructose 6-phosphate + phosphate. Its pathway is carbohydrate biosynthesis; gluconeogenesis. This Clostridium botulinum (strain Langeland / NCTC 10281 / Type F) protein is Fructose-1,6-bisphosphatase class 3.